A 568-amino-acid chain; its full sequence is uncharacterized protein (568 aa).

Over residues 334 to 346 (DDNEEKNNDRPKI) the composition is skewed to basic and acidic residues. 2 disordered regions span residues 334–382 (DDNE…NDQN) and 436–479 (QVEE…SCKN). Residues 458-477 (KIASSASKNDNSNNKNSKSC) are compositionally biased toward low complexity.

It to yeast YJL043w.

This is an uncharacterized protein from Saccharomyces cerevisiae (strain ATCC 204508 / S288c) (Baker's yeast).